The following is a 348-amino-acid chain: D-erythrose-4-phosphate dehydrogenase (348 aa).

12–13 provides a ligand contact to NAD(+); that stretch reads RI. Substrate is bound by residues 154–156, R200, 213–214, and R236; these read SCT and TR. The Nucleophile role is filled by C155. Residue N318 coordinates NAD(+).

The protein belongs to the glyceraldehyde-3-phosphate dehydrogenase family. Epd subfamily. In terms of assembly, homotetramer.

It is found in the cytoplasm. The catalysed reaction is D-erythrose 4-phosphate + NAD(+) + H2O = 4-phospho-D-erythronate + NADH + 2 H(+). It participates in cofactor biosynthesis; pyridoxine 5'-phosphate biosynthesis; pyridoxine 5'-phosphate from D-erythrose 4-phosphate: step 1/5. Catalyzes the NAD-dependent conversion of D-erythrose 4-phosphate to 4-phosphoerythronate. This is D-erythrose-4-phosphate dehydrogenase from Erwinia tasmaniensis (strain DSM 17950 / CFBP 7177 / CIP 109463 / NCPPB 4357 / Et1/99).